A 269-amino-acid chain; its full sequence is Membrane protein insertase YidC 1 (269 aa).

Residues 1-20 (MKKKFSLIAMAGAALLLLTA) form the signal peptide. Cys-21 carries N-palmitoyl cysteine lipidation. Cys-21 carries the S-diacylglycerol cysteine lipid modification. 4 consecutive transmembrane segments (helical) span residues 45 to 65 (IRFL…TIVI), 124 to 144 (YMGC…YQAL), 165 to 185 (PTFI…YLMM), and 203 to 223 (PIFI…YWVI).

This sequence belongs to the OXA1/ALB3/YidC family. Type 2 subfamily.

Its subcellular location is the cell membrane. Functionally, required for the insertion and/or proper folding and/or complex formation of integral membrane proteins into the membrane. Involved in integration of membrane proteins that insert both dependently and independently of the Sec translocase complex, as well as at least some lipoproteins. The polypeptide is Membrane protein insertase YidC 1 (Lactococcus lactis subsp. lactis (strain IL1403) (Streptococcus lactis)).